We begin with the raw amino-acid sequence, 415 residues long: Multidrug resistance protein MdtA (415 aa).

An N-terminal signal peptide occupies residues 1–21 (MKGSYKSRWVIVIVVVIAAIA). Disordered regions lie at residues 32-59 (SRSAAPGATKQAQQSPAGGRRGMRSGPL) and 392-415 (EAQSATTSEEKATSREYAKKGARS). Residues 399-415 (SEEKATSREYAKKGARS) show a composition bias toward basic and acidic residues.

It belongs to the membrane fusion protein (MFP) (TC 8.A.1) family. As to quaternary structure, part of a tripartite efflux system composed of MdtA, MdtB and MdtC.

Its subcellular location is the cell inner membrane. The MdtABC tripartite complex confers resistance against novobiocin and deoxycholate. This chain is Multidrug resistance protein MdtA, found in Escherichia coli O17:K52:H18 (strain UMN026 / ExPEC).